A 380-amino-acid polypeptide reads, in one-letter code: Variant-surface-glycoprotein phospholipase C (380 aa).

Residues 31 to 205 (ITQVCFVGSH…SRRRIFLVVG (175 aa)) enclose the PI-PLC X-box domain.

Monomer.

The protein localises to the membrane. The catalysed reaction is a 6-(alpha-D-glucosaminyl)-1-(1,2-diacyl-sn-glycero-3-phospho)-1D-myo-inositol = 6-(alpha-D-glucosaminyl)-1D-myo-inositol 1,2-cyclic phosphate + a 1,2-diacyl-sn-glycerol. By hydrolysis of the attached glycolipid, releases soluble variant surface glycoprotein containing phosphoinositol from the cell wall of T.brucei after cell lysis. It also cleaves similar membrane anchors on some mammalian proteins. VSG lipase may play a role in processes such as parasite differentiation or antigenic variation. The polypeptide is Variant-surface-glycoprotein phospholipase C (Trypanosoma cruzi).